The chain runs to 605 residues: MPCAMELPSTPDELAAQQADSAALKDLLKDPSRWHSIPLLNYTPLHKLKDQTLVRFRGMIQDMMDPEIYLERYEVKSADGSKRVQEGKYRDCLKIANGEVIDYNADGNVHGERRTMFVVSVPGLNDWSKEHEKLCCPQIDLASLGQSPSSAKKRTIVGEEEAMDVDVASETTFKRPCLKEIQKDSEPVGASKSSVLGSDYLINSPLPDRPSMACMVKVYEEFDTYQLNSLVDFVGFLSVDASLDAATLEIDDCENLSELQAAHPSPFLIPRLHAFGVQVLPHANPLLDKSLRQPTEICEETYPTHLAVHKDLRMLLKLCLFDDDLAAEYLLSHLISTVYSRSEMQSIGKFALNLCNLPKNCEAYATKLYQILELLLPASHYMPMTLVTLNTAAFAPKKDYETNKLVSGVLQLAPHTHLVLDETCMQQGKLEANGVHAVQHLAHLINNQELKCDFQYYQIDYQANIPVLVLSEGRSMLPSDFVLPINADSKAVELVDESLKAAHHYLQPSRLQQFRKYLTTARTSGFNVSEEHTEMIQQDFVDMRKANVKSNADDLHGLLVLSRLLGIARGKDTLDKETWQLATEFEAKRRQRIQSLPKSSAQLRN.

A phosphoserine mark is found at serine 147 and serine 150.

The protein belongs to the MCMBP family. As to quaternary structure, interacts with the MCM complex.

It localises to the nucleus. In terms of biological role, associated component of the MCM complex that acts as a regulator of DNA replication. Binds to the MCM complex during late S phase and may act by promoting the disassembly of the MCM complex from chromatin. The polypeptide is Mini-chromosome maintenance complex-binding protein (Drosophila melanogaster (Fruit fly)).